Consider the following 474-residue polypeptide: 3-isopropylmalate dehydratase large subunit (474 aa).

C350, C411, and C414 together coordinate [4Fe-4S] cluster.

Belongs to the aconitase/IPM isomerase family. LeuC type 1 subfamily. In terms of assembly, heterodimer of LeuC and LeuD. [4Fe-4S] cluster is required as a cofactor.

It catalyses the reaction (2R,3S)-3-isopropylmalate = (2S)-2-isopropylmalate. It functions in the pathway amino-acid biosynthesis; L-leucine biosynthesis; L-leucine from 3-methyl-2-oxobutanoate: step 2/4. Its function is as follows. Catalyzes the isomerization between 2-isopropylmalate and 3-isopropylmalate, via the formation of 2-isopropylmaleate. In Hydrogenovibrio crunogenus (strain DSM 25203 / XCL-2) (Thiomicrospira crunogena), this protein is 3-isopropylmalate dehydratase large subunit.